We begin with the raw amino-acid sequence, 493 residues long: Vacuolar-processing enzyme (493 aa).

A signal peptide spans 1 to 19; sequence MGSSQLSTLLFFTIVVTFL. A glycan (N-linked (GlcNAc...) asparagine) is linked at asparagine 147. The active site involves histidine 174. Cysteine 216 acts as the Nucleophile in catalysis. A disulfide bond links cysteine 249 and cysteine 263. N-linked (GlcNAc...) asparagine glycosylation is found at asparagine 295 and asparagine 331. 2 cysteine pairs are disulfide-bonded: cysteine 429–cysteine 459 and cysteine 441–cysteine 476.

The protein belongs to the peptidase C13 family.

In terms of biological role, asparagine-specific endopeptidase involved in the processing of vacuolar seed protein precursors into the mature forms. The chain is Vacuolar-processing enzyme from Vicia sativa (Spring vetch).